Reading from the N-terminus, the 661-residue chain is Zinc finger protein 81 (661 aa).

In terms of domain architecture, KRAB spans 21–92; sequence VSFEDVTVDF…EGEAPHQSCS (72 aa). A Glycyl lysine isopeptide (Lys-Gly) (interchain with G-Cter in SUMO2) cross-link involves residue K266. C2H2-type zinc fingers lie at residues 330–352, 358–380, 386–408, 414–436, 442–464, 470–492, 498–520, 526–548, 554–576, 582–604, 610–632, and 638–660; these read YICT…EKTH, YKCN…QTTH, FECS…QKIH, HKCS…QRIH, YICT…QRIH, YECS…KRIH, YICT…QKSH, YICA…QTIH, YVCA…QRIH, YKCP…QRIH, and YKCS…RNIH.

Belongs to the krueppel C2H2-type zinc-finger protein family.

The protein localises to the nucleus. May be involved in transcriptional regulation. The chain is Zinc finger protein 81 (ZNF81) from Homo sapiens (Human).